The following is a 196-amino-acid chain: Carnitine operon protein CaiE (196 aa).

A disordered region spans residues 173 to 196; sequence TQPLRQMEENRPRLQGTTDVTPKR. The span at 187–196 shows a compositional bias: polar residues; sequence QGTTDVTPKR.

Belongs to the transferase hexapeptide repeat family.

It participates in amine and polyamine metabolism; carnitine metabolism. Functionally, overproduction of CaiE stimulates the activity of CaiB and CaiD. This chain is Carnitine operon protein CaiE, found in Escherichia coli O157:H7.